We begin with the raw amino-acid sequence, 814 residues long: Outer membrane usher protein SefC (814 aa).

Positions 1–30 are cleaved as a signal peptide; that stretch reads MKKTTITLFVLTSVFHSGNVFSRQYNFDYG. A disulfide bridge connects residues cysteine 792 and cysteine 813.

The protein belongs to the fimbrial export usher family.

It is found in the cell outer membrane. In terms of biological role, involved in the export and assembly of the SefA fimbrial subunit. The polypeptide is Outer membrane usher protein SefC (sefC) (Salmonella enteritidis).